Consider the following 151-residue polypeptide: Large ribosomal subunit protein bL9 (151 aa).

Belongs to the bacterial ribosomal protein bL9 family.

In terms of biological role, binds to the 23S rRNA. The chain is Large ribosomal subunit protein bL9 from Mycobacteroides abscessus (strain ATCC 19977 / DSM 44196 / CCUG 20993 / CIP 104536 / JCM 13569 / NCTC 13031 / TMC 1543 / L948) (Mycobacterium abscessus).